We begin with the raw amino-acid sequence, 277 residues long: Phosphatidylglycerol--prolipoprotein diacylglyceryl transferase (277 aa).

The next 4 membrane-spanning stretches (helical) occupy residues isoleucine 18–alanine 38, isoleucine 51–tyrosine 71, isoleucine 89–isoleucine 109, and isoleucine 116–glycine 136. An a 1,2-diacyl-sn-glycero-3-phospho-(1'-sn-glycerol)-binding site is contributed by arginine 137. The next 3 helical transmembrane spans lie at glutamine 177–isoleucine 197, glycine 205–methionine 225, and phenylalanine 235–tyrosine 255.

Belongs to the Lgt family.

The protein localises to the cell membrane. The catalysed reaction is L-cysteinyl-[prolipoprotein] + a 1,2-diacyl-sn-glycero-3-phospho-(1'-sn-glycerol) = an S-1,2-diacyl-sn-glyceryl-L-cysteinyl-[prolipoprotein] + sn-glycerol 1-phosphate + H(+). The protein operates within protein modification; lipoprotein biosynthesis (diacylglyceryl transfer). Its function is as follows. Catalyzes the transfer of the diacylglyceryl group from phosphatidylglycerol to the sulfhydryl group of the N-terminal cysteine of a prolipoprotein, the first step in the formation of mature lipoproteins. This Listeria innocua serovar 6a (strain ATCC BAA-680 / CLIP 11262) protein is Phosphatidylglycerol--prolipoprotein diacylglyceryl transferase.